The primary structure comprises 82 residues: Large ribosomal subunit protein bL31B (82 aa).

Belongs to the bacterial ribosomal protein bL31 family. Type B subfamily. In terms of assembly, part of the 50S ribosomal subunit.

The polypeptide is Large ribosomal subunit protein bL31B (Dichelobacter nodosus (strain VCS1703A)).